The sequence spans 198 residues: FMN-dependent NADH:quinone oxidoreductase (198 aa).

Residues serine 10, 16–18, 94–97, and 138–141 each bind FMN; these read SQS, MYNF, and TRGG.

Belongs to the azoreductase type 1 family. As to quaternary structure, homodimer. The cofactor is FMN.

The enzyme catalyses 2 a quinone + NADH + H(+) = 2 a 1,4-benzosemiquinone + NAD(+). It catalyses the reaction N,N-dimethyl-1,4-phenylenediamine + anthranilate + 2 NAD(+) = 2-(4-dimethylaminophenyl)diazenylbenzoate + 2 NADH + 2 H(+). In terms of biological role, quinone reductase that provides resistance to thiol-specific stress caused by electrophilic quinones. Also exhibits azoreductase activity. Catalyzes the reductive cleavage of the azo bond in aromatic azo compounds to the corresponding amines. This is FMN-dependent NADH:quinone oxidoreductase from Shewanella baltica (strain OS185).